Consider the following 223-residue polypeptide: Putative C-type lectin protein 51 (223 aa).

An N-terminal signal peptide occupies residues 1 to 31 (MAKRINFTSCLIFTSCFTAFIVSLCLLVSSC). One can recognise a C-type lectin domain in the interval 111–218 (QEGRCYHYSR…CDTPRRCLCG (108 aa)). C193 and C209 form a disulfide bridge.

The protein is Putative C-type lectin protein 51 (51) of Equine herpesvirus 2 (strain 86/87) (EHV-2).